Reading from the N-terminus, the 382-residue chain is Alcohol dehydrogenase 1 (382 aa).

The Zn(2+) site is built by C49, T51, H71, C101, C104, C107, C115, and C179. 2 residues coordinate an alcohol: T51 and H71. NAD(+) is bound at residue T51. NAD(+) is bound by residues 204 to 209, D228, R233, T275, V298, 298 to 300, F325, and R375; these read GLGAVG and VGV.

This sequence belongs to the zinc-containing alcohol dehydrogenase family. As to quaternary structure, homodimer. Zn(2+) serves as cofactor.

The protein resides in the cytoplasm. It catalyses the reaction a primary alcohol + NAD(+) = an aldehyde + NADH + H(+). The catalysed reaction is a secondary alcohol + NAD(+) = a ketone + NADH + H(+). Functionally, this protein is responsible for the conversion of alcohols to aldehydes in plants and is important for NAD metabolism during anaerobic respiration. The sequence is that of Alcohol dehydrogenase 1 (ADH1) from Petunia hybrida (Petunia).